The primary structure comprises 82 residues: Large ribosomal subunit protein bL27 (82 aa).

The disordered stretch occupies residues 1-54; it reads MAHKKGQGASRNGRDSESKRLGMKVGAGQRVSTGSILVRQRGTKWHPSQNVGRG.

It belongs to the bacterial ribosomal protein bL27 family.

This Chlamydia caviae (strain ATCC VR-813 / DSM 19441 / 03DC25 / GPIC) (Chlamydophila caviae) protein is Large ribosomal subunit protein bL27.